The chain runs to 477 residues: ATP synthase subunit beta, chloroplastic (477 aa).

Glycine 156–threonine 163 provides a ligand contact to ATP.

Belongs to the ATPase alpha/beta chains family. In terms of assembly, F-type ATPases have 2 components, CF(1) - the catalytic core - and CF(0) - the membrane proton channel. CF(1) has five subunits: alpha(3), beta(3), gamma(1), delta(1), epsilon(1). CF(0) has four main subunits: a(1), b(1), b'(1) and c(9-12).

Its subcellular location is the plastid. It localises to the chloroplast thylakoid membrane. The catalysed reaction is ATP + H2O + 4 H(+)(in) = ADP + phosphate + 5 H(+)(out). In terms of biological role, produces ATP from ADP in the presence of a proton gradient across the membrane. The catalytic sites are hosted primarily by the beta subunits. This Bigelowiella natans (Pedinomonas minutissima) protein is ATP synthase subunit beta, chloroplastic.